A 161-amino-acid polypeptide reads, in one-letter code: S-ribosylhomocysteine lyase (161 aa).

Fe cation contacts are provided by histidine 57, histidine 61, and cysteine 124.

It belongs to the LuxS family. As to quaternary structure, homodimer. It depends on Fe cation as a cofactor.

The enzyme catalyses S-(5-deoxy-D-ribos-5-yl)-L-homocysteine = (S)-4,5-dihydroxypentane-2,3-dione + L-homocysteine. Involved in the synthesis of autoinducer 2 (AI-2) which is secreted by bacteria and is used to communicate both the cell density and the metabolic potential of the environment. The regulation of gene expression in response to changes in cell density is called quorum sensing. Catalyzes the transformation of S-ribosylhomocysteine (RHC) to homocysteine (HC) and 4,5-dihydroxy-2,3-pentadione (DPD). This Macrococcus caseolyticus (strain JCSC5402) (Macrococcoides caseolyticum) protein is S-ribosylhomocysteine lyase.